The primary structure comprises 242 residues: MNDVIIRQLAHLIPYQPLWEAMQTFTARRQSQTTDEIWFLEHEPVFTQGLAGKPEHVLNSGNIPLIRTDRGGQVTYHGPGQLMMYLLLDLNRLGLSTRTFVRTIENTVAESLQEWGIPAQGKETAPGVYVDDKKICSIGLRVRKGFSYHGLALNVAMDLTPFSCINPCGFKGLTMTQIQDYVNPIEMDAVKRTIIPLFLKNFGYNQPAIMVETSLEFLIDDHLRSFSEKLGERETVTNSRQN.

The BPL/LPL catalytic domain maps to S31 to Q206. Substrate-binding positions include R70–H77, S137–G139, and G150–A152. The active-site Acyl-thioester intermediate is C168.

The protein belongs to the LipB family.

The protein localises to the cytoplasm. It carries out the reaction octanoyl-[ACP] + L-lysyl-[protein] = N(6)-octanoyl-L-lysyl-[protein] + holo-[ACP] + H(+). The protein operates within protein modification; protein lipoylation via endogenous pathway; protein N(6)-(lipoyl)lysine from octanoyl-[acyl-carrier-protein]: step 1/2. Its function is as follows. Catalyzes the transfer of endogenously produced octanoic acid from octanoyl-acyl-carrier-protein onto the lipoyl domains of lipoate-dependent enzymes. Lipoyl-ACP can also act as a substrate although octanoyl-ACP is likely to be the physiological substrate. This chain is Octanoyltransferase, found in Coxiella burnetii (strain RSA 493 / Nine Mile phase I).